The sequence spans 366 residues: MWNATLSEEPGYNLTLPDLGWDAPADNDSLTDELLPLFPAPLLAGVTATCVALFVVGIAGNLLTMLVVSRFRELRTTTNLYLSSMAFSDLLIFLCMPLDLVRLWQYRPWNFGDLLCKLFQFVSESCTYATVLTITALSVERYFAICFPLRAKVVVTKGRVKLVILVIWAVAFCSAGPIFVLVGVEHENGTDPRDTNECRATEFAVRSGLLTVMVWVSSVFFFLPVFCLTVLYSLIGRKLWRRKRGEAAVGASLRDQNHKQTVKMLAVVVFAFILCWLPFHVGRYLFSKSFEPGSLEIAQISQYCNLVSFVLFYLSAAINPILYNIMSKKYRVAVFKLLGFEPFSQRKLSTLKDESSRAWTETSINT.

Over 1–40 (MWNATLSEEPGYNLTLPDLGWDAPADNDSLTDELLPLFPA) the chain is Extracellular. N-linked (GlcNAc...) asparagine glycosylation is found at Asn-3, Asn-13, and Asn-27. Residues 41–66 (PLLAGVTATCVALFVVGIAGNLLTML) traverse the membrane as a helical segment. At 67-72 (VVSRFR) the chain is on the cytoplasmic side. Residues 73–96 (ELRTTTNLYLSSMAFSDLLIFLCM) form a helical membrane-spanning segment. At 97 to 117 (PLDLVRLWQYRPWNFGDLLCK) the chain is on the extracellular side. Cysteines 116 and 198 form a disulfide. The chain crosses the membrane as a helical span at residues 118 to 139 (LFQFVSESCTYATVLTITALSV). Residues 140–162 (ERYFAICFPLRAKVVVTKGRVKL) lie on the Cytoplasmic side of the membrane. A helical transmembrane segment spans residues 163–183 (VILVIWAVAFCSAGPIFVLVG). At 184–211 (VEHENGTDPRDTNECRATEFAVRSGLLT) the chain is on the extracellular side. Asn-188 carries an N-linked (GlcNAc...) asparagine glycan. A helical membrane pass occupies residues 212–235 (VMVWVSSVFFFLPVFCLTVLYSLI). Residues 236-263 (GRKLWRRKRGEAAVGASLRDQNHKQTVK) lie on the Cytoplasmic side of the membrane. Residues 264–285 (MLAVVVFAFILCWLPFHVGRYL) form a helical membrane-spanning segment. Over 286-302 (FSKSFEPGSLEIAQISQ) the chain is Extracellular. Residues 303-326 (YCNLVSFVLFYLSAAINPILYNIM) form a helical membrane-spanning segment. Residues 327-366 (SKKYRVAVFKLLGFEPFSQRKLSTLKDESSRAWTETSINT) lie on the Cytoplasmic side of the membrane.

This sequence belongs to the G-protein coupled receptor 1 family.

The protein localises to the cell membrane. Receptor for ghrelin, coupled to G-alpha-11 proteins. Stimulates growth hormone secretion. Also binds other growth hormone releasing peptides (GHRP) (e.g. Met-enkephalin and GHRP-6) as well as non-peptide, low molecular weight secretagogues (e.g. L-692,429, MK-0677, adenosine). This Mustela putorius furo (European domestic ferret) protein is Growth hormone secretagogue receptor type 1 (GHSR).